The primary structure comprises 123 residues: Ribosome-binding factor A (123 aa).

This sequence belongs to the RbfA family. In terms of assembly, monomer. Binds 30S ribosomal subunits, but not 50S ribosomal subunits or 70S ribosomes.

It is found in the cytoplasm. In terms of biological role, one of several proteins that assist in the late maturation steps of the functional core of the 30S ribosomal subunit. Associates with free 30S ribosomal subunits (but not with 30S subunits that are part of 70S ribosomes or polysomes). Required for efficient processing of 16S rRNA. May interact with the 5'-terminal helix region of 16S rRNA. In Delftia acidovorans (strain DSM 14801 / SPH-1), this protein is Ribosome-binding factor A.